The chain runs to 194 residues: Dephospho-CoA kinase (194 aa).

The DPCK domain occupies 4–194 (VIGLTGSIGM…VKEILQKLGA (191 aa)). 12-17 (GMGKTT) lines the ATP pocket.

It belongs to the CoaE family.

Its subcellular location is the cytoplasm. It catalyses the reaction 3'-dephospho-CoA + ATP = ADP + CoA + H(+). It functions in the pathway cofactor biosynthesis; coenzyme A biosynthesis; CoA from (R)-pantothenate: step 5/5. In terms of biological role, catalyzes the phosphorylation of the 3'-hydroxyl group of dephosphocoenzyme A to form coenzyme A. In Agrobacterium fabrum (strain C58 / ATCC 33970) (Agrobacterium tumefaciens (strain C58)), this protein is Dephospho-CoA kinase.